The primary structure comprises 481 residues: MQFHGYEDLRSRLLSGELTCEQVISDYLQRIDSSRDDNIFTVVFHDEAMARARELDSKLQRGEAPGVLFGMPIAIKDNIAMKGAPLSCASKILAGYESVYDATVIKRMQAEDAIFVGRTNMDEFAMGSSNENSAIGPVPNPYDKTRVPGGSSGGSAAAVANDLAMVALGSDTGGSVRQPAGFCNIIGLKPTYGRISRYGLVAFASSFDQIGLLAANCDDAALVLGVIAGKDEHDATSSHHDVPEYDTAMDHVSVDGLRIGVPRAFFPESLNADVAGVVKAGLKKLEEAGAELVEIDLPESDYAIAAYYILVTAEASSNLARFDGARYGYRSPDSPDLSSMYVNSRTEGFGAEVKRRIMLGTYVLSAGYYDTYYKKAQQVRRVFQDKYREAFEKVDVIFGPTSPFPPFGIGDKMDNPLEMYLADVFTVPASIVGMPAISVPVGFDSLGLPVGAHLICNFFEEGKMLGIARHLQTLCQTAPSN.

Active-site charge relay system residues include Lys-76 and Ser-151. The active-site Acyl-ester intermediate is Ser-175.

Belongs to the amidase family. GatA subfamily. As to quaternary structure, heterotrimer of A, B and C subunits.

The catalysed reaction is L-glutamyl-tRNA(Gln) + L-glutamine + ATP + H2O = L-glutaminyl-tRNA(Gln) + L-glutamate + ADP + phosphate + H(+). In terms of biological role, allows the formation of correctly charged Gln-tRNA(Gln) through the transamidation of misacylated Glu-tRNA(Gln) in organisms which lack glutaminyl-tRNA synthetase. The reaction takes place in the presence of glutamine and ATP through an activated gamma-phospho-Glu-tRNA(Gln). This Chlorobaculum tepidum (strain ATCC 49652 / DSM 12025 / NBRC 103806 / TLS) (Chlorobium tepidum) protein is Glutamyl-tRNA(Gln) amidotransferase subunit A.